The chain runs to 213 residues: Probable transaldolase (213 aa).

Catalysis depends on Lys83, which acts as the Schiff-base intermediate with substrate.

Belongs to the transaldolase family. Type 3B subfamily.

The protein resides in the cytoplasm. It carries out the reaction D-sedoheptulose 7-phosphate + D-glyceraldehyde 3-phosphate = D-erythrose 4-phosphate + beta-D-fructose 6-phosphate. It participates in carbohydrate degradation; pentose phosphate pathway; D-glyceraldehyde 3-phosphate and beta-D-fructose 6-phosphate from D-ribose 5-phosphate and D-xylulose 5-phosphate (non-oxidative stage): step 2/3. In terms of biological role, transaldolase is important for the balance of metabolites in the pentose-phosphate pathway. The sequence is that of Probable transaldolase from Oceanobacillus iheyensis (strain DSM 14371 / CIP 107618 / JCM 11309 / KCTC 3954 / HTE831).